The primary structure comprises 267 residues: Glucosamine-6-phosphate deaminase (267 aa).

Catalysis depends on D72, which acts as the Proton acceptor; for enolization step. The For ring-opening step role is filled by D141. H143 (proton acceptor; for ring-opening step) is an active-site residue. The active-site For ring-opening step is the E148.

It belongs to the glucosamine/galactosamine-6-phosphate isomerase family. NagB subfamily. As to quaternary structure, homohexamer.

It carries out the reaction alpha-D-glucosamine 6-phosphate + H2O = beta-D-fructose 6-phosphate + NH4(+). The protein operates within amino-sugar metabolism; N-acetylneuraminate degradation; D-fructose 6-phosphate from N-acetylneuraminate: step 5/5. Its activity is regulated as follows. Allosterically activated by N-acetylglucosamine 6-phosphate (GlcNAc6P). Its function is as follows. Catalyzes the reversible isomerization-deamination of glucosamine 6-phosphate (GlcN6P) to form fructose 6-phosphate (Fru6P) and ammonium ion. This is Glucosamine-6-phosphate deaminase from Pasteurella multocida (strain Pm70).